Reading from the N-terminus, the 104-residue chain is Flagellar hook-basal body complex protein FliE (104 aa).

This sequence belongs to the FliE family.

It localises to the bacterial flagellum basal body. The protein is Flagellar hook-basal body complex protein FliE of Serratia proteamaculans (strain 568).